Consider the following 383-residue polypeptide: Succinyl-diaminopimelate desuccinylase (383 aa).

His70 contacts Zn(2+). Asp72 is an active-site residue. Residue Asp103 coordinates Zn(2+). Glu137 serves as the catalytic Proton acceptor. Positions 138, 166, and 352 each coordinate Zn(2+).

The protein belongs to the peptidase M20A family. DapE subfamily. Homodimer. Requires Zn(2+) as cofactor. Co(2+) serves as cofactor.

The enzyme catalyses N-succinyl-(2S,6S)-2,6-diaminopimelate + H2O = (2S,6S)-2,6-diaminopimelate + succinate. It participates in amino-acid biosynthesis; L-lysine biosynthesis via DAP pathway; LL-2,6-diaminopimelate from (S)-tetrahydrodipicolinate (succinylase route): step 3/3. Its function is as follows. Catalyzes the hydrolysis of N-succinyl-L,L-diaminopimelic acid (SDAP), forming succinate and LL-2,6-diaminopimelate (DAP), an intermediate involved in the bacterial biosynthesis of lysine and meso-diaminopimelic acid, an essential component of bacterial cell walls. The sequence is that of Succinyl-diaminopimelate desuccinylase from Hahella chejuensis (strain KCTC 2396).